The following is a 238-amino-acid chain: Ribonuclease PH (238 aa).

Residues Arg86 and 124 to 126 (GTR) each bind phosphate.

Belongs to the RNase PH family. Homohexameric ring arranged as a trimer of dimers.

The catalysed reaction is tRNA(n+1) + phosphate = tRNA(n) + a ribonucleoside 5'-diphosphate. Functionally, phosphorolytic 3'-5' exoribonuclease that plays an important role in tRNA 3'-end maturation. Removes nucleotide residues following the 3'-CCA terminus of tRNAs; can also add nucleotides to the ends of RNA molecules by using nucleoside diphosphates as substrates, but this may not be physiologically important. Probably plays a role in initiation of 16S rRNA degradation (leading to ribosome degradation) during starvation. The polypeptide is Ribonuclease PH (Vibrio atlanticus (strain LGP32) (Vibrio splendidus (strain Mel32))).